The chain runs to 381 residues: Subtilisin J (381 aa).

Residues 1–29 form the signal peptide; it reads MRSKKLWISLLFALTLIFTMAFSNMSVQA. The propeptide occupies 30 to 106; that stretch reads AGKSSTEKKY…VEEDHIAHEY (77 aa). The 66-residue stretch at 38–103 folds into the Inhibitor I9 domain; that stretch reads KYIVGFKQTM…VAYVEEDHIA (66 aa). Gln-108 contacts Ca(2+). The region spanning 111 to 380 is the Peptidase S8 domain; the sequence is PYGISQIKAP…KGLINVQAAA (270 aa). The active-site Charge relay system is Asp-138. Asp-147 is a Ca(2+) binding site. His-170 functions as the Charge relay system in the catalytic mechanism. Leu-181, Asn-183, Ile-185, Val-187, Ala-275, Tyr-277, and Thr-280 together coordinate Ca(2+). Catalysis depends on Ser-327, which acts as the Charge relay system.

It belongs to the peptidase S8 family. The cofactor is Ca(2+).

The protein localises to the secreted. It catalyses the reaction Hydrolysis of proteins with broad specificity for peptide bonds, and a preference for a large uncharged residue in P1. Hydrolyzes peptide amides.. Subtilisin is an extracellular alkaline serine protease, it catalyzes the hydrolysis of proteins and peptide amides. The polypeptide is Subtilisin J (aprJ) (Geobacillus stearothermophilus (Bacillus stearothermophilus)).